The primary structure comprises 284 residues: Polyamine aminopropyltransferase (284 aa).

Positions 2–237 (ELWYTEKHTE…GHWLFGFASK (236 aa)) constitute a PABS domain. Q31 provides a ligand contact to S-methyl-5'-thioadenosine. H62 and D86 together coordinate spermidine. S-methyl-5'-thioadenosine contacts are provided by residues E106 and 137 to 138 (DG). D155 acts as the Proton acceptor in catalysis. Spermidine is bound at residue 155–158 (DSTD). Position 162 (P162) interacts with S-methyl-5'-thioadenosine.

Belongs to the spermidine/spermine synthase family. As to quaternary structure, homodimer or homotetramer.

The protein resides in the cytoplasm. It carries out the reaction S-adenosyl 3-(methylsulfanyl)propylamine + putrescine = S-methyl-5'-thioadenosine + spermidine + H(+). The protein operates within amine and polyamine biosynthesis; spermidine biosynthesis; spermidine from putrescine: step 1/1. Its function is as follows. Catalyzes the irreversible transfer of a propylamine group from the amino donor S-adenosylmethioninamine (decarboxy-AdoMet) to putrescine (1,4-diaminobutane) to yield spermidine. This chain is Polyamine aminopropyltransferase, found in Clostridium botulinum (strain Alaska E43 / Type E3).